The following is a 441-amino-acid chain: Xylose isomerase (441 aa).

Residues His-99 and Asp-102 contribute to the active site. Residues Glu-230, Glu-266, His-269, Asp-294, Asp-305, Asp-307, and Asp-337 each coordinate Mg(2+).

The protein belongs to the xylose isomerase family. Homotetramer. Mg(2+) is required as a cofactor.

The protein resides in the cytoplasm. It catalyses the reaction alpha-D-xylose = alpha-D-xylulofuranose. Functionally, exhibits xylose isomerase activity. The protein is Xylose isomerase (xylA) of Bacillus sp. (strain LW2).